We begin with the raw amino-acid sequence, 523 residues long: NAD(P) transhydrogenase subunit alpha (523 aa).

Topologically, residues 1–411 (MKIGAPREIF…AEIATFRKQT (411 aa)) are cytoplasmic. NAD(+) contacts are provided by residues 127 to 130 (QKMD), Val-177, 197 to 199 (DVR), and Gly-229. The next 2 membrane-spanning stretches (helical) occupy residues 412-432 (VSQV…GMYA) and 433-455 (PPSF…QVIW). Residues 456–464 (NVSHSLHTP) are Cytoplasmic-facing. Residues 465–485 (LMAVTNAISGIVILGALLQIG) traverse the membrane as a helical segment. Residues 486 to 489 (SGNV) lie on the Periplasmic side of the membrane. A helical transmembrane segment spans residues 490–510 (LVVLLAAISVLIATINIVGGF). Over 511–523 (LVTRRMLAMFQKS) the chain is Cytoplasmic.

This sequence belongs to the AlaDH/PNT family. As to quaternary structure, heterodimer of an alpha (PntA) and a beta (PntB) chain.

The protein localises to the cell inner membrane. It catalyses the reaction NAD(+) + NADPH + H(+)(in) = NADH + NADP(+) + H(+)(out). Functionally, the transhydrogenation between NADH and NADP is coupled to respiration and ATP hydrolysis and functions as a proton pump across the membrane. This chain is NAD(P) transhydrogenase subunit alpha, found in Cereibacter sphaeroides (Rhodobacter sphaeroides).